The following is a 226-amino-acid chain: Amelogenin (226 aa).

The first 16 residues, 1–16, serve as a signal peptide directing secretion; that stretch reads MGTWILFACLLGTAFA. Ser-32 bears the Phosphoserine mark. The tract at residues 86 to 196 is disordered; it reads QQHPPSHTTL…LPPQQALPPM (111 aa). 2 stretches are compositionally biased toward low complexity: residues 88–120 and 137–182; these read HPPS…MPVP and PTSQ…SPLH. Residues 183–192 are compositionally biased toward pro residues; it reads PIQPLPPQQA.

It belongs to the amelogenin family.

Its subcellular location is the secreted. The protein localises to the extracellular space. The protein resides in the extracellular matrix. Its function is as follows. Plays a role in the biomineralization of teeth. Seems to regulate the formation of crystallites during the secretory stage of tooth enamel development. Thought to play a major role in the structural organization and mineralization of developing enamel. The chain is Amelogenin (AMEL) from Cavia porcellus (Guinea pig).